We begin with the raw amino-acid sequence, 397 residues long: P-selectin glycoprotein ligand 1 (397 aa).

Residues 1-17 form the signal peptide; that stretch reads MSPSFLVLLTILGPGNS. Residues 18–41 constitute a propeptide that is removed on maturation; that stretch reads LQLQDPWGHETKEAPGPVHLRERR. The Extracellular segment spans residues 18–307; sequence LQLQDPWGHE…SSDLIPVKQC (290 aa). Sulfotyrosine is present on Y54. T58 is a glycosylation site (O-linked (GalNAc...) threonine). A glycan (N-linked (GlcNAc...) asparagine) is linked at N66. Residues 89 to 261 are disordered; sequence TSAGTSERAT…TMETASTESN (173 aa). The segment covering 120–198 has biased composition (polar residues); it reads STDSATQWSL…PMEAETSQPA (79 aa). Repeat copies occupy residues 126–135, 136–145, 146–155, 156–165, 166–175, 176–185, 186–195, 196–205, 206–215, and 216–225. Positions 126-225 are 10 X 10 AA tandem repeats; sequence QWSLTSVETV…KPAPTEAETT (100 aa). The span at 236-261 shows a compositional bias: polar residues; sequence LFTTSAATEVPSTEPTTMETASTESN. N261 carries an N-linked (GlcNAc...) asparagine glycan. A helical transmembrane segment spans residues 308–328; that stretch reads LLIILILASLATIFLVCTVVL. Topologically, residues 329–397 are cytoplasmic; the sequence is AVRLSRKTHM…DDLTLHSFLP (69 aa). Positions 364-390 are disordered; the sequence is PVTANGGLPKVQDLKTEPSGDRDGDDL. Basic and acidic residues predominate over residues 375–390; that stretch reads QDLKTEPSGDRDGDDL. The residue at position 391 (T391) is a Phosphothreonine. Position 394 is a phosphoserine (S394).

Homodimer; disulfide-linked. Interacts with P- and E-selectins, through their lectin/EGF domains. Interaction with P-selectin requires sialyl Lewis X glycan modification and tyrosine sulfation, probably on Tyr-54, for high affinity binding. Dimerization appears not to be required for P-selectin/SELP binding. Interacts with SNX20. Interacts with MSN and SYK; mediates SYK activation downstream of SELPLG. Interacts with HAVCR1. Post-translationally, displays complex, core-2, sialylated and fucosylated O-linked oligosaccharides, at least some of which appear to contain poly-N-acetyllactosamine with varying degrees of substitution. Mainly disialylated or neutral forms of the core-2 tetrasaccharide, Galbeta1--&gt;4GlcNAcbeta1--&gt;6(Galbeta1--&gt;3)GalNAcOH. The GlcN:GalN ratio is approximately 2:1 and the Man:Fuc ratio 3:5. Contains about 14% fucose with alpha-1,3 linkage present in two forms: One species is a disialylated, monofucosylated glycan, and the other, a monosialylated, trifucosylated glycan with a polylactosamine backbone. The fucosylated forms carry the Lewis antigen and are important for interaction with selectins and for functioning. No sulfated O-glycans. Some N-glycosylation. In terms of tissue distribution, highly expressed in blood, bone marrow, brain, adipose tissue, spleen, and thymus. Also expressed in heart, kidney, liver, muscle, ovary, and stomach.

Its subcellular location is the cell membrane. Its function is as follows. An SLe(x)-type proteoglycan, which through high affinity, calcium-dependent interactions with E- and P-selectins, mediates rapid rolling of leukocytes over vascular surfaces during the initial steps in inflammation. Critical for the initial leukocyte capture. In Mus musculus (Mouse), this protein is P-selectin glycoprotein ligand 1 (Selplg).